Consider the following 212-residue polypeptide: tRNA(Phe) 7-((3-amino-3-carboxypropyl)-4-demethylwyosine(37)-N(4))-methyltransferase 2 (212 aa).

It belongs to the TYW3 family.

The catalysed reaction is 4-demethyl-7-[(3S)-3-amino-3-carboxypropyl]wyosine(37) in tRNA(Phe) + S-adenosyl-L-methionine = 7-[(3S)-3-amino-3-carboxypropyl]wyosine(37) in tRNA(Phe) + S-adenosyl-L-homocysteine + H(+). In terms of biological role, S-adenosyl-L-methionine-dependent methyltransferase that acts as a component of the wyosine derivatives biosynthesis pathway. Probably methylates N-4 position of wybutosine-86 to produce wybutosine-72. The chain is tRNA(Phe) 7-((3-amino-3-carboxypropyl)-4-demethylwyosine(37)-N(4))-methyltransferase 2 from Thermococcus kodakarensis (strain ATCC BAA-918 / JCM 12380 / KOD1) (Pyrococcus kodakaraensis (strain KOD1)).